We begin with the raw amino-acid sequence, 144 residues long: Oxoglutarate dehydrogenase inhibitor (144 aa).

T14 carries the phosphothreonine modification. The region spanning 68 to 117 (TAAGRHPDSDIFLDDVTVSRRHAEFRRNGDQYEVVDVGSLNGTYVNREPK) is the FHA domain.

The protein resides in the cytoplasm. In terms of biological role, an essential component of the PknG signaling pathway. When unphosphorylated, it inhibits the activity of 2-oxoglutarate dehydrogenase. When phosphorylated it does not inhibit 2-oxoglutarate dehydrogenase. In Corynebacterium jeikeium (strain K411), this protein is Oxoglutarate dehydrogenase inhibitor (odhI).